Consider the following 426-residue polypeptide: Histidine--tRNA ligase (426 aa).

The protein belongs to the class-II aminoacyl-tRNA synthetase family.

Its subcellular location is the cytoplasm. The catalysed reaction is tRNA(His) + L-histidine + ATP = L-histidyl-tRNA(His) + AMP + diphosphate + H(+). This is Histidine--tRNA ligase from Saccharolobus islandicus (strain L.S.2.15 / Lassen #1) (Sulfolobus islandicus).